A 355-amino-acid chain; its full sequence is S-methyl-5'-thioadenosine phosphorylase (355 aa).

Residues threonine 45, 91-92 (RH), and 124-125 (SA) contribute to the phosphate site. Substrate is bound at residue methionine 226. Serine 227 is a phosphate binding site. 250 to 252 (DYD) contributes to the substrate binding site.

It belongs to the PNP/MTAP phosphorylase family. MTAP subfamily. As to quaternary structure, homotrimer.

It is found in the cytoplasm. The protein localises to the nucleus. The catalysed reaction is S-methyl-5'-thioadenosine + phosphate = 5-(methylsulfanyl)-alpha-D-ribose 1-phosphate + adenine. The protein operates within amino-acid biosynthesis; L-methionine biosynthesis via salvage pathway; S-methyl-5-thio-alpha-D-ribose 1-phosphate from S-methyl-5'-thioadenosine (phosphorylase route): step 1/1. Catalyzes the reversible phosphorylation of S-methyl-5'-thioadenosine (MTA) to adenine and 5-methylthioribose-1-phosphate. Involved in the breakdown of MTA, a major by-product of polyamine biosynthesis. Responsible for the first step in the methionine salvage pathway after MTA has been generated from S-adenosylmethionine. Has broad substrate specificity with 6-aminopurine nucleosides as preferred substrates. The protein is S-methyl-5'-thioadenosine phosphorylase of Emericella nidulans (strain FGSC A4 / ATCC 38163 / CBS 112.46 / NRRL 194 / M139) (Aspergillus nidulans).